The following is a 284-amino-acid chain: Tropomyosin (284 aa).

The stretch at 1 to 273 forms a coiled coil; the sequence is MDAIKKKMLA…KEKYKAISDE (273 aa).

Belongs to the tropomyosin family. In terms of assembly, homodimer.

Its function is as follows. Tropomyosin, in association with the troponin complex, plays a central role in the calcium dependent regulation of muscle contraction. This chain is Tropomyosin, found in Haliotis diversicolor (Abalone).